Consider the following 248-residue polypeptide: Probable septum site-determining protein MinC (248 aa).

Residues 115 to 144 (PTAVSPPPPPPPPARAEPAPPAARPAPGRM) form a disordered region. The span at 118–138 (VSPPPPPPPPARAEPAPPAAR) shows a compositional bias: pro residues.

This sequence belongs to the MinC family. Interacts with MinD and FtsZ.

In terms of biological role, cell division inhibitor that blocks the formation of polar Z ring septums. Rapidly oscillates between the poles of the cell to destabilize FtsZ filaments that have formed before they mature into polar Z rings. Prevents FtsZ polymerization. The protein is Probable septum site-determining protein MinC of Xanthomonas euvesicatoria pv. vesicatoria (strain 85-10) (Xanthomonas campestris pv. vesicatoria).